A 184-amino-acid polypeptide reads, in one-letter code: Protein DMP2 (184 aa).

4 helical membrane-spanning segments follow: residues 19–39, 45–65, 105–125, and 142–162; these read LIKL…PVLT, LLIN…SCCF, VGDF…SLLD, and IFLM…FTVF.

This sequence belongs to the plant DMP1 protein family. In terms of tissue distribution, expressed constitutively in leaves, stems, flowers, siliques and roots.

It is found in the endoplasmic reticulum membrane. Its subcellular location is the vacuole membrane. In terms of biological role, involved in membrane remodeling. The polypeptide is Protein DMP2 (Arabidopsis thaliana (Mouse-ear cress)).